The primary structure comprises 3620 residues: Cubilin (3620 aa).

An N-terminal signal peptide occupies residues 1 to 20 (MSSPFLWSLIILLTFAESNG). A propeptide spans 21–32 (EAGGFELQRQKR) (removed in mature form). Residues 39 to 46 (PRMATERG) form an interaction with AMN region. A glycan (N-linked (GlcNAc...) asparagine) is linked at Asn-102. The region spanning 129 to 165 (DKKVCSSNPCQNGGTCLNLHDSFFCICPSQWKGPLCS) is the EGF-like 1 domain. Intrachain disulfides connect Cys-133/Cys-144, Cys-138/Cys-153, Cys-155/Cys-164, Cys-171/Cys-187, Cys-181/Cys-196, and Cys-198/Cys-207. In terms of domain architecture, EGF-like 2; calcium-binding spans 167–208 (DVNECQIYSGTPLGCQNGATCENTAGSYSCLCSPETHGPQCA). N-linked (GlcNAc...) asparagine glycosylation occurs at Asn-253. In terms of domain architecture, EGF-like 3; calcium-binding spans 260-301 (DIDECNLQHAPCSPLVQCFNTQGSFYCGACPTGWQGNGYSCQ). Disulfide bonds link Cys-264–Cys-277, Cys-271–Cys-286, Cys-289–Cys-300, Cys-306–Cys-321, Cys-313–Cys-330, Cys-333–Cys-344, Cys-350–Cys-363, Cys-357–Cys-373, Cys-396–Cys-406, Cys-401–Cys-415, Cys-417–Cys-426, Cys-433–Cys-444, Cys-438–Cys-453, Cys-455–Cys-464, Cys-471–Cys-497, Cys-524–Cys-546, Cys-587–Cys-613, Cys-640–Cys-662, and Cys-705–Cys-730. Positions 302 to 345 (DIDECKINNGGCSVVPPVMCVNTLGSYHCQACPPGYQGDGRVCT) constitute an EGF-like 4; calcium-binding domain. EGF-like domains follow at residues 346-382 (VIDI…YTGN) and 392-427 (LSDT…INCT). N-linked (GlcNAc...) asparagine glycosylation occurs at Asn-425. Positions 429–465 (NINECLSNPCFNGGTCVDGVNAFSCECTRFWTGFLCQ) constitute an EGF-like 7; calcium-binding domain. CUB domains lie at 471 to 583 (CGGS…WETQ), 587 to 699 (CGGI…YLTS), 705 to 812 (CGGN…YQVA), 813 to 924 (CGGE…FSAA), 928 to 1038 (CGEI…YEAT), 1044 to 1158 (CMED…WDGS), 1162 to 1274 (CGGN…YQQT), 1275 to 1386 (CRNV…WFIH), 1388 to 1503 (CGGE…WQAV), 1507 to 1616 (CGGI…FNQV), 1617 to 1731 (CGGH…YAAS), 1735 to 1847 (CGGT…FTKI), and 1849 to 1960 (GNDN…WFAV). N-linked (GlcNAc...) asparagine glycans are attached at residues Asn-708 and Asn-745. Cys-757 and Cys-775 are oxidised to a cystine. N-linked (GlcNAc...) asparagine glycosylation occurs at Asn-777. Residues Cys-813 and Cys-838 are joined by a disulfide bond. A glycan (N-linked (GlcNAc...) asparagine) is linked at Asn-853. 2 disulfides stabilise this stretch: Cys-865–Cys-887 and Cys-928–Cys-954. Asn-953 carries an N-linked (GlcNAc...) asparagine glycan. Glu-976 contributes to the Ca(2+) binding site. An N-linked (GlcNAc...) asparagine glycan is attached at Asn-980. Cys-981 and Cys-1001 are disulfide-bonded. Residues Asp-984, Asp-1023, Asp-1025, and Leu-1026 each coordinate Ca(2+). Cys-1044 and Cys-1070 are oxidised to a cystine. Positions 1092, 1102, and 1143 each coordinate Ca(2+). The cysteines at positions 1099 and 1121 are disulfide-linked. Cys-1162 and Cys-1188 are oxidised to a cystine. Residue Asn-1165 is glycosylated (N-linked (GlcNAc...) asparagine). A Ca(2+)-binding site is contributed by Glu-1210. The N-linked (GlcNAc...) asparagine glycan is linked to Asn-1214. Cys-1215 and Cys-1237 form a disulfide bridge. Positions 1218, 1259, and 1262 each coordinate Ca(2+). A disulfide bridge links Cys-1275 with Cys-1303. N-linked (GlcNAc...) asparagine glycans are attached at residues Asn-1304 and Asn-1316. A Ca(2+)-binding site is contributed by Glu-1325. The N-linked (GlcNAc...) asparagine glycan is linked to Asn-1329. Cys-1330 and Cys-1348 are disulfide-bonded. Ca(2+) contacts are provided by Asp-1333, Asp-1370, and Val-1372. Disulfide bonds link Cys-1388-Cys-1414 and Cys-1441-Cys-1463. An N-linked (GlcNAc...) asparagine glycan is attached at Asn-1497. Cys-1507 and Cys-1533 are joined by a disulfide. Asn-1548 carries N-linked (GlcNAc...) asparagine glycosylation. 5 disulfides stabilise this stretch: Cys-1560–Cys-1578, Cys-1617–Cys-1644, Cys-1672–Cys-1694, Cys-1735–Cys-1761, and Cys-1788–Cys-1809. Residue Asn-1643 is glycosylated (N-linked (GlcNAc...) asparagine). N-linked (GlcNAc...) asparagine glycans are attached at residues Asn-1799, Asn-1816, and Asn-1882. Cys-1902 and Cys-1924 are oxidised to a cystine. N-linked (GlcNAc...) asparagine glycosylation occurs at Asn-1961. 2 disulfide bridges follow: Cys-1975/Cys-2003 and Cys-2029/Cys-2051. 14 consecutive CUB domains span residues 1975–2088 (CGGF…FHKS), 2089–2210 (CGGY…YEAK), 2214–2331 (CGGN…YAIA), 2333–2445 (CGGR…FESS), 2449–2562 (CGGE…YTSS), 2567–2684 (CGGS…YSFT), 2686–2798 (CGGI…WNTQ), 2802–2916 (CGGI…FVSR), 2917–3032 (CGGN…YKIT), 3034–3147 (CGGV…FQQT), 3154–3271 (CGGY…YTTV), 3275–3392 (CGGT…IAGC), 3392–3504 (CNRE…WTSS), and 3508–3620 (CGGT…TWDS). Residues Asn-2082 and Asn-2114 are each glycosylated (N-linked (GlcNAc...) asparagine). Disulfide bonds link Cys-2089–Cys-2115, Cys-2214–Cys-2244, and Cys-2272–Cys-2294. Residue Asn-2317 is glycosylated (N-linked (GlcNAc...) asparagine). A disulfide bridge connects residues Cys-2333 and Cys-2360. Asn-2383 and Asn-2397 each carry an N-linked (GlcNAc...) asparagine glycan. Intrachain disulfides connect Cys-2387–Cys-2408, Cys-2449–Cys-2475, and Cys-2502–Cys-2524. N-linked (GlcNAc...) asparagine glycosylation is found at Asn-2528, Asn-2578, Asn-2589, and Asn-2607. Cys-2567 and Cys-2596 are oxidised to a cystine. 7 cysteine pairs are disulfide-bonded: Cys-2625–Cys-2646, Cys-2686–Cys-2712, Cys-2739–Cys-2761, Cys-2802–Cys-2828, Cys-2857–Cys-2880, Cys-2917–Cys-2943, and Cys-2974–Cys-2996. N-linked (GlcNAc...) asparagine glycosylation is present at Asn-2810. N-linked (GlcNAc...) asparagine glycosylation is found at Asn-2920, Asn-2942, and Asn-2986. Phosphothreonine is present on Thr-3005. 2 disulfide bridges follow: Cys-3034–Cys-3061 and Cys-3088–Cys-3110. Asn-3039, Asn-3100, and Asn-3122 each carry an N-linked (GlcNAc...) asparagine glycan. 2 disulfides stabilise this stretch: Cys-3154–Cys-3182 and Cys-3212–Cys-3234. Asn-3265, Asn-3280, and Asn-3292 each carry an N-linked (GlcNAc...) asparagine glycan. 2 disulfide bridges follow: Cys-3275/Cys-3303 and Cys-3329/Cys-3351. Asn-3354 carries N-linked (GlcNAc...) asparagine glycosylation. Cysteines 3392 and 3418 form a disulfide. Residues Asn-3427, Asn-3454, and Asn-3530 are each glycosylated (N-linked (GlcNAc...) asparagine). 3 disulfide bridges follow: Cys-3445/Cys-3467, Cys-3508/Cys-3534, and Cys-3561/Cys-3583.

In terms of assembly, interacts with AMN. Component of the cubam complex composed of one CUBN trimer and one AMN chain. The cubam complex can dimerize. Interacts with LRP2 in a dual-receptor complex in a calcium-dependent manner. Found in a complex with PID1/PCLI1, LRP1 and CUBNI. Interacts with LRP1 and PID1/PCLI1. The precursor is cleaved by a trans-Golgi proteinase furin, removing a propeptide. In terms of processing, N-glycosylated. In terms of tissue distribution, detected in kidney cortex (at protein level). Detected in kidney, duodenum and jejunum.

The protein localises to the apical cell membrane. It localises to the cell membrane. Its subcellular location is the membrane. It is found in the coated pit. The protein resides in the endosome. The protein localises to the lysosome membrane. Its function is as follows. Endocytic receptor which plays a role in lipoprotein, vitamin and iron metabolism by facilitating their uptake. Acts together with LRP2 to mediate endocytosis of high-density lipoproteins, GC, hemoglobin, ALB, TF and SCGB1A1. Acts together with AMN to mediate endocytosis of the CBLIF-cobalamin complex. Binds to ALB, MB, Kappa and lambda-light chains, TF, hemoglobin, GC, SCGB1A1, APOA1, high density lipoprotein, and the CBLIF-cobalamin complex. Ligand binding requires calcium. Serves as important transporter in several absorptive epithelia, including intestine, renal proximal tubules and embryonic yolk sac. May play an important role in the development of the peri-implantation embryo through internalization of APOA1 and cholesterol. Binds to LGALS3 at the maternal-fetal interface. The protein is Cubilin (CUBN) of Canis lupus familiaris (Dog).